Consider the following 398-residue polypeptide: DNA-directed RNA polymerase III subunit RPC4 (398 aa).

Residues 1–149 (MSEGNAAGEP…IKKEKRETDE (149 aa)) are disordered. At S2 the chain carries N-acetylserine. A Phosphoserine modification is found at S42. Basic and acidic residues-rich tracts occupy residues 66 to 100 (KIKE…RGRP), 116 to 128 (MMKK…KTVD), and 140 to 149 (IKKEKRETDE). Glycyl lysine isopeptide (Lys-Gly) (interchain with G-Cter in SUMO2) cross-links involve residues K68 and K78. 3 positions are modified to omega-N-methylarginine: R95, R97, and R99. Glycyl lysine isopeptide (Lys-Gly) (interchain with G-Cter in SUMO2) cross-links involve residues K141, K152, K160, K190, K199, K206, K220, K285, K302, and K396. Positions 191–244 (EESEEPEAKPFSAGPKEEDMEVDVPAVKVKEEPRDEEEEAKVKAPPRAARKTPG) are disordered.

This sequence belongs to the eukaryotic RPC4/POLR3D RNA polymerase subunit family. As to quaternary structure, component of the RNA polymerase III complex consisting of 17 subunits: a ten-subunit horseshoe-shaped catalytic core composed of POLR3A/RPC1, POLR3B/RPC2, POLR1C/RPAC1, POLR1D/RPAC2, POLR3K/RPC10, POLR2E/RPABC1, POLR2F/RPABC2, POLR2H/RPABC3, POLR2K/RPABC4 and POLR2L/RPABC5; a mobile stalk composed of two subunits POLR3H/RPC8 and CRCP/RPC9, protruding from the core and functioning primarily in transcription initiation; and additional subunits homologous to general transcription factors of the RNA polymerase II machinery, POLR3C/RPC3-POLR3F/RPC6-POLR3G/RPC7 heterotrimer required for transcription initiation and POLR3D/RPC4-POLR3E/RPC5 heterodimer involved in both transcription initiation and termination. Post-translationally, sumoylation on Lys-141 can serve as a signal to mark misfolded Pol III for proteasomal degradation.

It localises to the nucleus. Its function is as follows. DNA-dependent RNA polymerase catalyzes the transcription of DNA into RNA using the four ribonucleoside triphosphates as substrates. Specific peripheric component of RNA polymerase III (Pol III) which synthesizes small non-coding RNAs including 5S rRNA, snRNAs, tRNAs and miRNAs from at least 500 distinct genomic loci. Enables recruitment of Pol III at transcription initiation site and drives transcription initiation from both type 2 and type 3 DNA promoters. Required for efficient transcription termination and reinitiation. Pol III plays a key role in sensing and limiting infection by intracellular bacteria and DNA viruses. Acts as nuclear and cytosolic DNA sensor involved in innate immune response. Can sense non-self dsDNA that serves as template for transcription into dsRNA. The non-self RNA polymerase III transcripts, such as Epstein-Barr virus-encoded RNAs (EBERs) induce type I interferon and NF-kappa-B through the RIG-I pathway. This is DNA-directed RNA polymerase III subunit RPC4 from Mus musculus (Mouse).